The sequence spans 432 residues: 5'-deoxyadenosine deaminase (432 aa).

Zn(2+)-binding residues include histidine 63 and histidine 65. Substrate contacts are provided by glutamate 92 and histidine 184. Residue histidine 211 participates in Zn(2+) binding. The substrate site is built by glutamate 214 and aspartate 299. Aspartate 299 contacts Zn(2+).

The protein belongs to the metallo-dependent hydrolases superfamily. MTA/SAH deaminase family. Homotetramer. Zn(2+) serves as cofactor.

The catalysed reaction is 5'-deoxyadenosine + H2O + H(+) = 5'-deoxyinosine + NH4(+). It catalyses the reaction S-adenosyl-L-homocysteine + H2O + H(+) = S-inosyl-L-homocysteine + NH4(+). It carries out the reaction S-methyl-5'-thioadenosine + H2O + H(+) = S-methyl-5'-thioinosine + NH4(+). The enzyme catalyses adenosine + H2O + H(+) = inosine + NH4(+). It functions in the pathway amino-acid biosynthesis; S-adenosyl-L-methionine biosynthesis. In terms of biological role, catalyzes the deamination of three SAM-derived enzymatic products, namely 5'-deoxyadenosine, S-adenosyl-L-homocysteine, and 5'-methylthioadenosine, to produce the inosine analogs. Can also deaminate adenosine. The preferred substrate for this enzyme is 5'-deoxyadenosine, but all these substrates are efficiently deaminated. Likely functions in a S-adenosyl-L-methionine (SAM) recycling pathway from S-adenosyl-L-homocysteine (SAH) produced from SAM-dependent methylation reactions. May also be involved in the recycling of 5'-deoxyadenosine, whereupon the 5'-deoxyribose moiety of 5'-deoxyinosine is further metabolized to deoxyhexoses used for the biosynthesis of aromatic amino acids in methanogens. In Methanosarcina barkeri (strain Fusaro / DSM 804), this protein is 5'-deoxyadenosine deaminase.